A 368-amino-acid chain; its full sequence is NAD(P)H-quinone oxidoreductase subunit 1, chloroplastic (368 aa).

Helical transmembrane passes span 27 to 47 (FIWI…GVLV), 97 to 117 (WLFN…YLVI), 130 to 150 (IGVF…LMAG), 269 to 289 (SSLF…PFLL), 308 to 328 (IIIG…IAIM), and 348 to 368 (FLLP…AFLL).

This sequence belongs to the complex I subunit 1 family. As to quaternary structure, NDH is composed of at least 16 different subunits, 5 of which are encoded in the nucleus.

Its subcellular location is the plastid. It localises to the chloroplast thylakoid membrane. The enzyme catalyses a plastoquinone + NADH + (n+1) H(+)(in) = a plastoquinol + NAD(+) + n H(+)(out). It catalyses the reaction a plastoquinone + NADPH + (n+1) H(+)(in) = a plastoquinol + NADP(+) + n H(+)(out). Functionally, NDH shuttles electrons from NAD(P)H:plastoquinone, via FMN and iron-sulfur (Fe-S) centers, to quinones in the photosynthetic chain and possibly in a chloroplast respiratory chain. The immediate electron acceptor for the enzyme in this species is believed to be plastoquinone. Couples the redox reaction to proton translocation, and thus conserves the redox energy in a proton gradient. In Physcomitrium patens (Spreading-leaved earth moss), this protein is NAD(P)H-quinone oxidoreductase subunit 1, chloroplastic.